Here is a 268-residue protein sequence, read N- to C-terminus: 3-methyl-2-oxobutanoate hydroxymethyltransferase (268 aa).

D41 and D80 together coordinate Mg(2+). 3-methyl-2-oxobutanoate contacts are provided by residues 41–42 (DS), D80, and K110. E112 contributes to the Mg(2+) binding site. The active-site Proton acceptor is the E178.

This sequence belongs to the PanB family. In terms of assembly, homodecamer; pentamer of dimers. Mg(2+) is required as a cofactor.

The protein resides in the cytoplasm. The enzyme catalyses 3-methyl-2-oxobutanoate + (6R)-5,10-methylene-5,6,7,8-tetrahydrofolate + H2O = 2-dehydropantoate + (6S)-5,6,7,8-tetrahydrofolate. It participates in cofactor biosynthesis; coenzyme A biosynthesis. Functionally, catalyzes the reversible reaction in which hydroxymethyl group from 5,10-methylenetetrahydrofolate is transferred onto alpha-ketoisovalerate to form ketopantoate. In Natronomonas pharaonis (strain ATCC 35678 / DSM 2160 / CIP 103997 / JCM 8858 / NBRC 14720 / NCIMB 2260 / Gabara) (Halobacterium pharaonis), this protein is 3-methyl-2-oxobutanoate hydroxymethyltransferase.